Consider the following 224-residue polypeptide: Urease accessory protein UreF (224 aa).

This sequence belongs to the UreF family. As to quaternary structure, ureD, UreF and UreG form a complex that acts as a GTP-hydrolysis-dependent molecular chaperone, activating the urease apoprotein by helping to assemble the nickel containing metallocenter of UreC. The UreE protein probably delivers the nickel.

It localises to the cytoplasm. In terms of biological role, required for maturation of urease via the functional incorporation of the urease nickel metallocenter. This is Urease accessory protein UreF from Enterobacter sp. (strain 638).